The chain runs to 379 residues: Queuine tRNA-ribosyltransferase (379 aa).

Asp-94 serves as the catalytic Proton acceptor. Substrate contacts are provided by residues 94-98, Asp-148, Gln-191, and Gly-218; that span reads DSGGF. Residues 249 to 255 form an RNA binding region; that stretch reads GVGSPDS. Asp-268 (nucleophile) is an active-site residue. The segment at 273–277 is RNA binding; important for wobble base 34 recognition; that stretch reads TRIAR. 4 residues coordinate Zn(2+): Cys-306, Cys-308, Cys-311, and His-337.

It belongs to the queuine tRNA-ribosyltransferase family. As to quaternary structure, homodimer. Within each dimer, one monomer is responsible for RNA recognition and catalysis, while the other monomer binds to the replacement base PreQ1. It depends on Zn(2+) as a cofactor.

The catalysed reaction is 7-aminomethyl-7-carbaguanine + guanosine(34) in tRNA = 7-aminomethyl-7-carbaguanosine(34) in tRNA + guanine. The protein operates within tRNA modification; tRNA-queuosine biosynthesis. In terms of biological role, catalyzes the base-exchange of a guanine (G) residue with the queuine precursor 7-aminomethyl-7-deazaguanine (PreQ1) at position 34 (anticodon wobble position) in tRNAs with GU(N) anticodons (tRNA-Asp, -Asn, -His and -Tyr). Catalysis occurs through a double-displacement mechanism. The nucleophile active site attacks the C1' of nucleotide 34 to detach the guanine base from the RNA, forming a covalent enzyme-RNA intermediate. The proton acceptor active site deprotonates the incoming PreQ1, allowing a nucleophilic attack on the C1' of the ribose to form the product. After dissociation, two additional enzymatic reactions on the tRNA convert PreQ1 to queuine (Q), resulting in the hypermodified nucleoside queuosine (7-(((4,5-cis-dihydroxy-2-cyclopenten-1-yl)amino)methyl)-7-deazaguanosine). This is Queuine tRNA-ribosyltransferase from Bacillus cytotoxicus (strain DSM 22905 / CIP 110041 / 391-98 / NVH 391-98).